Consider the following 205-residue polypeptide: Adenylyl-sulfate kinase (205 aa).

31-38 (GLSGAGKS) lines the ATP pocket. Catalysis depends on Ser105, which acts as the Phosphoserine intermediate.

This sequence belongs to the APS kinase family.

The catalysed reaction is adenosine 5'-phosphosulfate + ATP = 3'-phosphoadenylyl sulfate + ADP + H(+). Its pathway is sulfur metabolism; hydrogen sulfide biosynthesis; sulfite from sulfate: step 2/3. Functionally, catalyzes the synthesis of activated sulfate. The sequence is that of Adenylyl-sulfate kinase from Shewanella oneidensis (strain ATCC 700550 / JCM 31522 / CIP 106686 / LMG 19005 / NCIMB 14063 / MR-1).